A 162-amino-acid chain; its full sequence is UPF0114 protein PA4574 (162 aa).

3 consecutive transmembrane segments (helical) span residues 10-32 (YASRWLLAPIYMGLSLALLALTI), 53-75 (LILVLLSLIDMALVGGLLVMVMI), and 136-156 (LMWYVIIHMTFVLSAFAMGYL).

Belongs to the UPF0114 family.

The protein localises to the cell membrane. The chain is UPF0114 protein PA4574 from Pseudomonas aeruginosa (strain ATCC 15692 / DSM 22644 / CIP 104116 / JCM 14847 / LMG 12228 / 1C / PRS 101 / PAO1).